A 374-amino-acid chain; its full sequence is Histone acetyltransferase type B catalytic subunit (374 aa).

Interaction with histone H4 N-terminus stretches follow at residues 42-44 (DSE) and 194-196 (YKY). The N-acetyltransferase domain maps to 135–303 (VVYKSSLVDD…ESSRKSLKLE (169 aa)). Positions 197-205 (WHYLGAKSF) are interaction with HAT2. Acetyl-CoA is bound by residues 220–222 (FLI) and 227–233 (QNKGHGS). Catalysis depends on Glu-255, which acts as the Proton donor/acceptor. Asn-258 and Arg-267 together coordinate acetyl-CoA. Position 354 is a phosphoserine (Ser-354).

It belongs to the HAT1 family. In terms of assembly, component of the HAT-B complex composed of at least HAT1 and HAT2. In the cytoplasm, this complex binds to the histone H4 tail. In the nucleus, the HAT-B complex has an additional component, the histone H3/H4 chaperone HIF1.

Its subcellular location is the cytoplasm. It is found in the nucleus. It catalyses the reaction L-lysyl-[protein] + acetyl-CoA = N(6)-acetyl-L-lysyl-[protein] + CoA + H(+). Its function is as follows. Catalytic component of the histone acetylase B (HAT-B) complex. Acetylates 'Lys-12' of free histone H4 in the cytoplasm. The complex is also found in the nucleus, however it is not certain that it modifies histone H4 when packaged in chromatin. Histone H4 'Lys-12' acetylation is required for telomeric silencing. Has intrinsic substrate specificity that modifies lysine in recognition sequence GXGKXG. Involved in DNA double-strand break repair. The polypeptide is Histone acetyltransferase type B catalytic subunit (HAT1) (Saccharomyces cerevisiae (strain ATCC 204508 / S288c) (Baker's yeast)).